The following is a 131-amino-acid chain: Small ribosomal subunit protein uS8 (131 aa).

Belongs to the universal ribosomal protein uS8 family. In terms of assembly, part of the 30S ribosomal subunit. Contacts proteins S5 and S12.

Its function is as follows. One of the primary rRNA binding proteins, it binds directly to 16S rRNA central domain where it helps coordinate assembly of the platform of the 30S subunit. This Paraburkholderia phymatum (strain DSM 17167 / CIP 108236 / LMG 21445 / STM815) (Burkholderia phymatum) protein is Small ribosomal subunit protein uS8.